The sequence spans 537 residues: Spore coat protein SP70 (537 aa).

The first 20 residues, 1–20, serve as a signal peptide directing secretion; sequence MRILKLAALSCLLFIAPSLS. The 120-residue stretch at 21 to 140 folds into the DSCP-N domain; that stretch reads INCDGLSKDQ…CQIPATGGGP (120 aa). Residue N97 is glycosylated (N-linked (GlcNAc...) asparagine). In terms of domain architecture, Follistatin-like 1 spans 157-179; the sequence is SCDKVNCPNGYICTIVNQLAVCV. The tract at residues 183-246 is disordered; it reads SSSSSSSSTT…GSHTTTGGST (64 aa). Follistatin-like domains lie at 250 to 272, 278 to 296, 358 to 380, and 389 to 415; these read TCGN…AVCV, SCAN…GECI, TCKT…PTCV, and TCKD…EECC.

Post-translationally, phosphorylated and fucosylated.

This chain is Spore coat protein SP70 (cotB), found in Dictyostelium discoideum (Social amoeba).